A 419-amino-acid chain; its full sequence is Serine/threonine-protein kinase Kist (419 aa).

The region spanning 23-304 is the Protein kinase domain; it reads WQVQSRLGSG…AEMALCSPFF (282 aa). Residues 29-37 and K54 each bind ATP; that span reads LGSGSSASV. Residues D141 and D158 each act as proton acceptor in the active site. The RRM domain occupies 324 to 406; it reads RLLNVLDDDY…KFVVATFYPL (83 aa).

The protein belongs to the protein kinase superfamily. Ser/Thr protein kinase family. Interacts with stathmin, PAM and CDKN1B/p27Kip1.

It is found in the nucleus. It carries out the reaction L-seryl-[protein] + ATP = O-phospho-L-seryl-[protein] + ADP + H(+). It catalyses the reaction L-threonyl-[protein] + ATP = O-phospho-L-threonyl-[protein] + ADP + H(+). Its function is as follows. Upon serum stimulation, phosphorylates CDKN1B/p27Kip1, thus controlling CDKN1B subcellular location and cell cycle progression in G1 phase. May be involved in trafficking and/or processing of RNA. This chain is Serine/threonine-protein kinase Kist (UHMK1), found in Pongo abelii (Sumatran orangutan).